A 229-amino-acid chain; its full sequence is 7-cyano-7-deazaguanine synthase (229 aa).

7–17 (LSGGLDSSTIL) contacts ATP. 4 residues coordinate Zn(2+): Cys191, Cys199, Cys202, and Cys205.

It belongs to the QueC family. Zn(2+) serves as cofactor.

The enzyme catalyses 7-carboxy-7-deazaguanine + NH4(+) + ATP = 7-cyano-7-deazaguanine + ADP + phosphate + H2O + H(+). It participates in purine metabolism; 7-cyano-7-deazaguanine biosynthesis. Catalyzes the ATP-dependent conversion of 7-carboxy-7-deazaguanine (CDG) to 7-cyano-7-deazaguanine (preQ(0)). The polypeptide is 7-cyano-7-deazaguanine synthase (Nostoc sp. (strain PCC 7120 / SAG 25.82 / UTEX 2576)).